Here is a 291-residue protein sequence, read N- to C-terminus: BTB/POZ domain-containing protein 19 (291 aa).

Positions 29–98 (SDVRFVVGQE…LYTNSAKLQR (70 aa)) constitute a BTB domain. Positions 134 to 234 (CEALQVAVTF…LALLAPAELS (101 aa)) constitute a BACK domain.

The protein is BTB/POZ domain-containing protein 19 (BTBD19) of Bos taurus (Bovine).